The sequence spans 384 residues: Potassium channel subfamily K member 18 (384 aa).

Residues 1 to 23 lie on the Cytoplasmic side of the membrane; it reads MEVSGHPQARRCCPEALGKLFPG. Residues 24–44 form a helical membrane-spanning segment; the sequence is LCFLCFLVTYALVGAVVFSAI. N70 is a glycosylation site (N-linked (GlcNAc...) asparagine). An intramembrane region (pore-forming) is located at residues 103–129; it reads FLSSLFFCCTVFSTVGYGYIYPVTRLG. K(+) contacts are provided by T116, V117, G118, and Y119. The interval 116–121 is selectivity filter 1; it reads TVGYGY. Residues 130–148 form a helical membrane-spanning segment; it reads KYLCMLYALFGIPLMFLVL. The Cytoplasmic portion of the chain corresponds to 149-280; sequence TDTGDILATI…EVGQQVERLD (132 aa). The interval 200–205 is interaction with calcineurin; sequence PQIIIS. The interval 249–254 is interaction with YWHAH; that stretch reads RSNSCP. A phosphoserine mark is found at S252 and S264. A helical transmembrane segment spans residues 281–301; that stretch reads IPLPIIALIVFAYISCAAAIL. The segment at residues 314–328 is an intramembrane region (pore-forming); that stretch reads FYFCFVTLTTIGFGD. The tract at residues 323–328 is selectivity filter 2; it reads TIGFGD. Residues 335-355 traverse the membrane as a helical segment; the sequence is NFFLFFSIYIIVGMEIVFIAF. Residues 356-384 lie on the Cytoplasmic side of the membrane; it reads KLVQNRLIDIYKNVMLFFAKGKFYHLVKK.

Belongs to the two pore domain potassium channel (TC 1.A.1.8) family. As to quaternary structure, homodimer. Heterodimer with KCNK2. Heterodimer with KCNK10. Interacts with calcineurin. Interacts with YWHAH, in a phosphorylation-dependent manner. N-glycosylated. Post-translationally, phosphorylation of Ser-264 is required for the binding of 14-3-3eta/YWHAH. Calcineurin-mediated dephosphorylation enhances channel activity. Expressed in dorsal root ganglion and trigeminal ganglion neurons. Detected at low levels in spinal cord. Expressed in regulatory T cells (at protein level).

Its subcellular location is the cell membrane. The catalysed reaction is K(+)(in) = K(+)(out). Activated by volatile anesthetics but inhibited by amide local anesthetics. Inhibited by Ba(2+) ions. Inhibited by free polyunsaturated fatty acids. Channel conductance is sensitive to intracellular pH, it decreases at acidic pH and increases at basic pH. In contrast to its mouse ortholog, it is not regulated by extracellular protons. Insensitive to changes in temperature. Its function is as follows. K(+) channel that conducts outward and inward rectifying currents at depolarized and hyperpolarized membrane potentials, respectively. The outward rectifying currents are voltage-dependent, coupled to K(+) electrochemical gradient across the membrane, whereas the inward currents can be induced in response to activation of Ca(2+)-mobilizing receptors. Homo- and heterodimerizes to form functional channels with distinct regulatory and gating properties. In trigeminal ganglia sensory neurons, the heterodimers of KCNK18/TRESK and KCNK2/TREK-1 or KCNK10/TREK-2 inhibit neuronal firing and neurogenic inflammation by stabilizing the resting membrane potential at K(+) equilibrium potential as well as by regulating the threshold of action potentials and the spike frequency. In thymocytes, conducts K(+) currents upon T cell receptor (TCR) signaling leading to sustained Ca(2+) influx and NF-kappa-B activation, FOXP3 transcription and positive selection of regulatory T cell (Treg) progenitor subsets. Appears to mediate the analgesics effects of hydroxy-alpha-sanshool, a metabolite naturally present in Schezuan pepper and other Xanthoxylum plants. This Homo sapiens (Human) protein is Potassium channel subfamily K member 18.